The following is a 620-amino-acid chain: Protein regulator of cytokinesis 1 (620 aa).

Residues 1–303 form a required for the interaction with KIF4A region; sequence MRRSEVLAEE…IEAIRVELVQ (303 aa). Positions 1–341 are dimerization; that stretch reads MRRSEVLAEE…QLHDAEIVRL (341 aa). Coiled-coil stretches lie at residues 96-133, 211-304, and 383-463; these read ILQL…ELCE, SLEN…LVQY, and GNLL…TEML. The interval 342 to 466 is spectrin-fold; the sequence is KNYYEVHKEL…QTETEMLYGS (125 aa). The span at 446-459 shows a compositional bias: basic and acidic residues; that stretch reads AKQERQLKNKKQTE. The segment at 446 to 488 is disordered; that stretch reads AKQERQLKNKKQTETEMLYGSAPRTPSKRRGLAPNTPGKARKL. The interval 467–620 is unstructured, Arg/Lys rich; the sequence is APRTPSKRRG…GILNSTNIQS (154 aa). Phosphothreonine; by CDK1 is present on residues T470 and T481. Residues S513, R541, and S571 each carry the phosphoserine modification. The disordered stretch occupies residues 517-545; sequence RLPPSGSKPVAASTCSGKKTPRTGRHGAN. The residue at position 578 (T578) is a Phosphothreonine. The segment at 600–620 is disordered; sequence LSKASKSDATSGILNSTNIQS. Positions 606–620 are enriched in polar residues; the sequence is SDATSGILNSTNIQS. Phosphothreonine; by PLK1 is present on T616.

Belongs to the MAP65/ASE1 family. In terms of assembly, homodimer. Interacts with the C-terminal Rho-GAP domain and the basic region of RACGAP1. The interaction with RACGAP1 inhibits its GAP activity towards CDC42 in vitro, which may be required for maintaining normal spindle morphology. Interacts (via N-terminus) with the C-terminus of CENPE (via C-terminus); the interaction occurs during late mitosis. Interacts (via N-terminus) with KIF4A (via C-terminus); the interaction is required for the progression of mitosis. Interacts (via N-terminus) with KIF23 (via C-terminus); the interaction occurs during late mitosis. Interacts with KIF14 and KIF20A. Interacts with PLK1. Interacts with KIF20B. Interacts with CCDC66. Post-translationally, phosphorylation by CDK1 in early mitosis holds PRC1 in an inactive monomeric state, during the metaphase to anaphase transition, PRC1 is dephosphorylated, promoting interaction with KIF4A, which then translocates PRC1 along mitotic spindles to the plus ends of antiparallel interdigitating microtubules. Dephosphorylation also promotes MT-bundling activity by allowing dimerization. Phosphorylation by CDK1 prevents PLK1-binding: upon degradation of CDK1 at anaphase and dephosphorylation, it is then phosphorylated by PLK1, leading to cytokinesis. As to expression, overexpressed in bladder cancer cells.

Its subcellular location is the nucleus. The protein resides in the cytoplasm. It is found in the cytoskeleton. It localises to the spindle pole. The protein localises to the midbody. Its subcellular location is the chromosome. In terms of biological role, key regulator of cytokinesis that cross-links antiparrallel microtubules at an average distance of 35 nM. Essential for controlling the spatiotemporal formation of the midzone and successful cytokinesis. Required for KIF14 localization to the central spindle and midbody. Required to recruit PLK1 to the spindle. Stimulates PLK1 phosphorylation of RACGAP1 to allow recruitment of ECT2 to the central spindle. Acts as an oncogene for promoting bladder cancer cells proliferation, apoptosis inhibition and carcinogenic progression. This chain is Protein regulator of cytokinesis 1, found in Homo sapiens (Human).